The sequence spans 511 residues: Centrosomal protein CCDC61 (511 aa).

Positions 1–144 (MEVGTVVQEE…PLPLPYLGKP (144 aa)) are head domain. A coiled-coil region spans residues 147–272 (AELQKEIRAL…RVKSLTTELA (126 aa)). Disordered regions lie at residues 306–403 (TRVG…SREP) and 447–486 (RGRKLMSNGPAVSRGRHINKKPMCSTPAQRMRAGDTSMDT). Residues 315 to 335 (GSRERIEDRGRRSEERVRRAD) are compositionally biased toward basic and acidic residues. Residues 338 to 352 (GSRNCITRPSPSPTG) show a composition bias toward polar residues. Positions 366–378 (DRQRRQKEAELKS) are enriched in basic and acidic residues.

Belongs to the CCDC61 family. As to quaternary structure, forms homodimers (via head domain).

Its subcellular location is the cytoplasm. It is found in the cytoskeleton. It localises to the microtubule organizing center. The protein localises to the centrosome. The protein resides in the centriolar satellite. Its subcellular location is the cilium basal body. Microtubule-binding centrosomal protein required for centriole cohesion, independently of the centrosome-associated protein/CEP250 and rootletin/CROCC linker. In interphase, required for anchoring microtubule at the mother centriole subdistal appendages and for centrosome positioning. During mitosis, may be involved in spindle assembly and chromatin alignment by regulating the organization of spindle microtubules into a symmetrical structure. Plays a non-essential role in ciliogenesis. The protein is Centrosomal protein CCDC61 of Danio rerio (Zebrafish).